We begin with the raw amino-acid sequence, 269 residues long: MTAPNIEMIASSLRNCSLNGGGGGGGGRRRGRRAAAAEGSDDSEGVTVELNSEVALPYHWEQCLDIRTGQVYYINWEDGTRTTIDPRSSSAYSPSPASRSASSSSRRCSRARGRGGGGGAAAAASTTTSSGYTSVSSVGAVTAAAAAWRSHDSSGHGYGYGSYGYGYGYDGRDGDDEESSSSSSSSSSSSSASSSRGSAVSSTLSSFSPTDESASGAGSGYAVGDNGAHVLVAAGCRACFMYFMVPKTADVCPKCGSSGLLHLSRNGYV.

A disordered region spans residues 17–44 (SLNGGGGGGGGRRRGRRAAAAEGSDDSE). An EAR motif is present at residues 47-52 (TVELNS). A WW domain is found at 54-88 (VALPYHWEQCLDIRTGQVYYINWEDGTRTTIDPRS). 2 disordered regions span residues 83–133 (TIDP…SGYT) and 174–218 (GDDE…SGAG). 3 stretches are compositionally biased toward low complexity: residues 87–106 (RSSSAYSPSPASRSASSSSR), 121–133 (AAAASTTTSSGYT), and 180–202 (SSSSSSSSSSSSASSSRGSAVSS). Over residues 203–212 (TLSSFSPTDE) the composition is skewed to polar residues.

As to quaternary structure, binds to HDG1.

In terms of biological role, negatively regulates the cuticle development probably by interacting with the HD-ZIP IV transcription factor HDG1. The polypeptide is Protein CURLY FLAG LEAF 1 (Oryza sativa subsp. indica (Rice)).